Consider the following 151-residue polypeptide: 1,4-dihydroxy-2-naphthoyl-CoA hydrolase (151 aa).

Asp23 is a catalytic residue.

The protein belongs to the 4-hydroxybenzoyl-CoA thioesterase family. DHNA-CoA hydrolase subfamily.

It carries out the reaction 1,4-dihydroxy-2-naphthoyl-CoA + H2O = 1,4-dihydroxy-2-naphthoate + CoA + H(+). The protein operates within cofactor biosynthesis; phylloquinone biosynthesis. Its pathway is quinol/quinone metabolism; 1,4-dihydroxy-2-naphthoate biosynthesis; 1,4-dihydroxy-2-naphthoate from chorismate: step 7/7. Catalyzes the hydrolysis of 1,4-dihydroxy-2-naphthoyl-CoA (DHNA-CoA) to 1,4-dihydroxy-2-naphthoate (DHNA), a reaction involved in phylloquinone (vitamin K1) biosynthesis. The protein is 1,4-dihydroxy-2-naphthoyl-CoA hydrolase of Prochlorococcus marinus (strain MIT 9211).